A 574-amino-acid polypeptide reads, in one-letter code: Septation ring formation regulator EzrA (574 aa).

At 1–7 the chain is on the extracellular side; sequence MSSGIIL. The helical transmembrane segment at 8–26 threads the bilayer; that stretch reads LIVAIVLLVIIAYLVGVII. At 27–574 the chain is on the cytoplasmic side; the sequence is RKRNDSLITS…YEKTREHIRF (548 aa). 3 coiled-coil regions span residues 102–141, 274–350, and 459–520; these read NFIR…EEKN, ELVT…ETES, and QLEA…SFEA.

It belongs to the EzrA family.

Its subcellular location is the cell membrane. In terms of biological role, negative regulator of FtsZ ring formation; modulates the frequency and position of FtsZ ring formation. Inhibits FtsZ ring formation at polar sites. Interacts either with FtsZ or with one of its binding partners to promote depolymerization. The polypeptide is Septation ring formation regulator EzrA (Streptococcus pyogenes serotype M6 (strain ATCC BAA-946 / MGAS10394)).